We begin with the raw amino-acid sequence, 142 residues long: HTH-type transcriptional regulator LrpA1 (142 aa).

Residues 1 to 72 (MSTESTEERI…GQSIAMVGID (72 aa)) form the HTH asnC-type domain. The H-T-H motif DNA-binding region spans 22–41 (YAAIAERADVSKPTVRKYID).

In terms of biological role, transcription factor that regulates genes involved in amino acid metabolism. Represses the aspB3 gene, coding for an aspartate transaminase, in the presence of L-aspartate. Another target gene is the basal transcriptional regulator tfbB. Also binds its own promoter. This Halobacterium salinarum (strain ATCC 29341 / DSM 671 / R1) protein is HTH-type transcriptional regulator LrpA1 (lrpA1).